The primary structure comprises 384 residues: Aurora kinase (384 aa).

Composition is skewed to polar residues over residues 1 to 12 (MSYPNNKENSNN) and 19 to 29 (SVPSKQPQRVL). The segment at 1-100 (MSYPNNKENS…SSSSSSSQSV (100 aa)) is disordered. The segment covering 30–99 (QQQNTNINNH…SSSSSSSSQS (70 aa)) has biased composition (low complexity). The Protein kinase domain occupies 110 to 360 (FDIGKLLGMG…LKDVINHPWI (251 aa)). Residues 116 to 124 (LGMGRFGHV) and K139 contribute to the ATP site. The active-site Proton acceptor is the D233.

This sequence belongs to the protein kinase superfamily. Ser/Thr protein kinase family. Aurora subfamily. Interacts with icpA. Forms a complex at the central spindle.

The protein localises to the cytoplasm. The protein resides in the chromosome. It is found in the centromere. It localises to the cytoskeleton. Its subcellular location is the spindle pole. The protein localises to the cleavage furrow. The protein resides in the cell projection. It is found in the neuron projection. It carries out the reaction L-seryl-[protein] + ATP = O-phospho-L-seryl-[protein] + ADP + H(+). The catalysed reaction is L-threonyl-[protein] + ATP = O-phospho-L-threonyl-[protein] + ADP + H(+). Functionally, part of a chromosomal passenger complex. The sequence is that of Aurora kinase (aurK) from Dictyostelium discoideum (Social amoeba).